The chain runs to 155 residues: Small ribosomal subunit protein uS7c (155 aa).

It belongs to the universal ribosomal protein uS7 family. As to quaternary structure, part of the 30S ribosomal subunit.

It localises to the plastid. Its subcellular location is the chloroplast. In terms of biological role, one of the primary rRNA binding proteins, it binds directly to 16S rRNA where it nucleates assembly of the head domain of the 30S subunit. The chain is Small ribosomal subunit protein uS7c (rps7) from Pinus thunbergii (Japanese black pine).